The following is a 2157-amino-acid chain: Polyketide synthase 2 (2157 aa).

Residues F7–H244 form an N-terminal acylcarrier protein transacylase domain (SAT) region. A Ketosynthase family 3 (KS3) domain is found at D374–D807. Catalysis depends on for beta-ketoacyl synthase activity residues C546, H681, and H723. Positions G908–W1213 are malonyl-CoA:ACP transacylase (MAT) domain. Residue S998 is the For acyl/malonyl transferase activity of the active site. The tract at residues T1290–P1605 is product template (PT) domain. The tract at residues Q1294–S1428 is N-terminal hotdog fold. The 307-residue stretch at Q1294–N1600 folds into the PKS/mFAS DH domain. Residue H1327 is the Proton acceptor; for dehydratase activity of the active site. The C-terminal hotdog fold stretch occupies residues T1455–N1600. The Proton donor; for dehydratase activity role is filled by D1514. Positions A1629–G1653 are disordered. The 78-residue stretch at S1649–Q1726 folds into the Carrier 1 domain. S1686 bears the O-(pantetheine 4'-phosphoryl)serine mark. A disordered region spans residues D1729–D1765. The segment covering E1735–G1749 has biased composition (polar residues). In terms of domain architecture, Carrier 2 spans D1765 to E1839. S1799 is modified (O-(pantetheine 4'-phosphoryl)serine). The segment at A1875–E2151 is thioesterase (TE) domain. S1981 functions as the For thioesterase activity in the catalytic mechanism.

In terms of biological role, polyketide synthase; part of the Pks2 gene cluster that mediates the formation of infectious structures (appressoria), enabling these fungi to kill insects faster. The product of the Pks2 gene cluster is different from the one of Pks1 and has still not been identified. This chain is Polyketide synthase 2, found in Metarhizium guizhouense (strain ARSEF 977).